We begin with the raw amino-acid sequence, 277 residues long: Large ribosomal subunit protein uL2 (277 aa).

Positions 219-277 are disordered; sequence TVRGSVMNPNDHPHGGGEGKAPVGRKAPSTPWGKPALGLKTRNKKAKSDKLIVRRRNQK.

The protein belongs to the universal ribosomal protein uL2 family. In terms of assembly, part of the 50S ribosomal subunit. Forms a bridge to the 30S subunit in the 70S ribosome.

Its function is as follows. One of the primary rRNA binding proteins. Required for association of the 30S and 50S subunits to form the 70S ribosome, for tRNA binding and peptide bond formation. It has been suggested to have peptidyltransferase activity; this is somewhat controversial. Makes several contacts with the 16S rRNA in the 70S ribosome. The sequence is that of Large ribosomal subunit protein uL2 from Streptococcus suis (strain 98HAH33).